The sequence spans 373 residues: Phosphoserine aminotransferase (373 aa).

Arg-46 provides a ligand contact to L-glutamate. The pyridoxal 5'-phosphate site is built by Phe-104, Thr-150, Asp-172, and Gln-195. N6-(pyridoxal phosphate)lysine is present on Lys-196. Residue 247-248 (NT) participates in pyridoxal 5'-phosphate binding.

The protein belongs to the class-V pyridoxal-phosphate-dependent aminotransferase family. SerC subfamily. In terms of assembly, homodimer. Pyridoxal 5'-phosphate is required as a cofactor.

The protein localises to the cytoplasm. It catalyses the reaction O-phospho-L-serine + 2-oxoglutarate = 3-phosphooxypyruvate + L-glutamate. The catalysed reaction is 4-(phosphooxy)-L-threonine + 2-oxoglutarate = (R)-3-hydroxy-2-oxo-4-phosphooxybutanoate + L-glutamate. Its pathway is amino-acid biosynthesis; L-serine biosynthesis; L-serine from 3-phospho-D-glycerate: step 2/3. It functions in the pathway cofactor biosynthesis; pyridoxine 5'-phosphate biosynthesis; pyridoxine 5'-phosphate from D-erythrose 4-phosphate: step 3/5. Functionally, catalyzes the reversible conversion of 3-phosphohydroxypyruvate to phosphoserine and of 3-hydroxy-2-oxo-4-phosphonooxybutanoate to phosphohydroxythreonine. This is Phosphoserine aminotransferase from Rhodococcus jostii (strain RHA1).